A 210-amino-acid polypeptide reads, in one-letter code: Putative cutinase (210 aa).

The span at 26 to 38 shows a compositional bias: basic and acidic residues; sequence DSERLPLKRDEPG. A disordered region spans residues 26–58; the sequence is DSERLPLKRDEPGSRSMRSTFIPSSQCSNLSSA. Low complexity predominate over residues 49–58; it reads SSQCSNLSSA.

The enzyme catalyses cutin + H2O = cutin monomers.. The sequence is that of Putative cutinase from Phytophthora capsici.